The chain runs to 139 residues: Diacylglycerol acyltransferase/mycolyltransferase Ag85A (139 aa).

The Nucleophile role is filled by Ser10. 2 residues coordinate substrate: Ser10 and Asp38. Glu114 is an active-site residue. Substrate-binding positions include Phe116 to Thr119 and Lys123.

Belongs to the mycobacterial A85 antigen family. As to quaternary structure, homodimer.

It localises to the secreted. The protein resides in the cell wall. Its subcellular location is the cytoplasm. It carries out the reaction an acyl-CoA + a 1,2-diacyl-sn-glycerol = a triacyl-sn-glycerol + CoA. The catalysed reaction is 2 alpha,alpha'-trehalose 6-mycolate = alpha,alpha'-trehalose 6,6'-bismycolate + alpha,alpha-trehalose. Its function is as follows. The antigen 85 proteins (FbpA, FbpB, FbpC) are responsible for the high affinity of mycobacteria for fibronectin, a large adhesive glycoprotein, which facilitates the attachment of M.tuberculosis to murine alveolar macrophages (AMs). They also help to maintain the integrity of the cell wall by catalyzing the transfer of mycolic acids to cell wall arabinogalactan, and through the synthesis of alpha,alpha-trehalose dimycolate (TDM, cord factor). They catalyze the transfer of a mycoloyl residue from one molecule of alpha,alpha-trehalose monomycolate (TMM) to another TMM, leading to the formation of TDM. FbpA mediates triacylglycerol (TAG) formation with long-chain acyl-CoA as the acyl donor and 1,2-dipalmitoyl-sn-glycerol (1,2-dipalmitin) as the acyl acceptor. It has a preference for C26:0-CoA over C18:1-CoA. The chain is Diacylglycerol acyltransferase/mycolyltransferase Ag85A (fbpA) from Mycobacterium marinum.